A 387-amino-acid chain; its full sequence is Alkanesulfonate monooxygenase (387 aa).

Belongs to the SsuD family.

The catalysed reaction is an alkanesulfonate + FMNH2 + O2 = an aldehyde + FMN + sulfite + H2O + 2 H(+). Its function is as follows. Catalyzes the desulfonation of aliphatic sulfonates. The sequence is that of Alkanesulfonate monooxygenase from Cupriavidus necator (strain ATCC 17699 / DSM 428 / KCTC 22496 / NCIMB 10442 / H16 / Stanier 337) (Ralstonia eutropha).